The sequence spans 317 residues: Adenosine receptor A3 (317 aa).

At 1 to 14 (MPVNSTAVSWTSVT) the chain is on the extracellular side. An N-linked (GlcNAc...) asparagine glycan is attached at asparagine 4. A helical transmembrane segment spans residues 15 to 37 (YITVEILIGLCAIVGNVLVIWVV). The Cytoplasmic portion of the chain corresponds to 38-48 (KLNPSLQTTTF). A helical transmembrane segment spans residues 49 to 72 (YFIVSLALADIAVGVLVMPLAIVI). Residues 73–84 (SLGVTIHFYSCL) lie on the Extracellular side of the membrane. A disulfide bridge connects residues cysteine 83 and cysteine 165. A helical membrane pass occupies residues 85-106 (FMTCLMLIFTHASIMSLLAIAV). The Cytoplasmic segment spans residues 107–126 (DRYLRVKLTVRYRRVTTQRR). The chain crosses the membrane as a helical span at residues 127-148 (IWLALGLCWLVSFLVGLTPMFG). Topologically, residues 149–176 (WNMKLSSADENLTFLPCRFRSVMRMDYM) are extracellular. The N-linked (GlcNAc...) asparagine glycan is linked to asparagine 159. The helical transmembrane segment at 177 to 197 (VYFSFFLWILVPLVVMCAIYF) threads the bilayer. At 198 to 230 (DIFYIIRNRLSQSFSGSRETGAFYGREFKTAKS) the chain is on the cytoplasmic side. A helical transmembrane segment spans residues 231-254 (LLLVLFLFALCWLPLSIINCILYF). The Extracellular portion of the chain corresponds to 255 to 260 (DGQVPQ). The chain crosses the membrane as a helical span at residues 261-283 (TVLYLGILLSHANSMMNPIVYAY). The Cytoplasmic segment spans residues 284 to 317 (KIKKFKETYLLILKACVMCQPSKSMDPSTEQTSE). Cysteine 302 carries the S-palmitoyl cysteine lipid modification.

It belongs to the G-protein coupled receptor 1 family. Post-translationally, phosphorylation on Thr-315 and Ser-316 may be crucial for rapid desensitization. Phosphorylation on Thr-315 may be necessary for phosphorylation on Ser-316 to occur. In terms of tissue distribution, most abundant in lung, spleen and pineal gland. Moderate expression in brain, kidney and testis.

The protein localises to the cell membrane. In terms of biological role, receptor for adenosine. The activity of this receptor is mediated by G proteins which inhibits adenylyl cyclase. The sequence is that of Adenosine receptor A3 (ADORA3) from Ovis aries (Sheep).